The primary structure comprises 504 residues: ATP-dependent rRNA helicase RRP3 (504 aa).

Residues 34–62 are compositionally biased toward low complexity; it reads ASASSAASTKESLPVSETISISTSETPVS. Residues 34–99 are disordered; the sequence is ASASSAASTK…SSSSPPSVQS (66 aa). Residues 68–79 are compositionally biased toward basic and acidic residues; sequence SNKEDLSTKKDQ. A compositionally biased stretch (low complexity) spans 80–99; the sequence is SSASSSSSTSSSSSPPSVQS. The short motif at 98–126 is the Q motif element; sequence QSFTEFDLVPELLESIQSLKYTQPTPIQA. In terms of domain architecture, Helicase ATP-binding spans 129 to 301; the sequence is IPHALQGKDI…RSLNSPVQVE (173 aa). 142-149 is a binding site for ATP; it reads AETGSGKT. The DEAD box motif lies at 248–251; that stretch reads DEVD. Positions 327–471 constitute a Helicase C-terminal domain; it reads RLIQIVNLDS…DLPLDEMQGL (145 aa).

It belongs to the DEAD box helicase family. DDX47/RRP3 subfamily. In terms of assembly, interacts with the SSU processome.

Its subcellular location is the nucleus. The catalysed reaction is ATP + H2O = ADP + phosphate + H(+). ATP-dependent rRNA helicase required for pre-ribosomal RNA processing. Involved in the maturation of the 35S-pre-rRNA and to its cleavage to mature 18S rRNA. The protein is ATP-dependent rRNA helicase RRP3 of Lodderomyces elongisporus (strain ATCC 11503 / CBS 2605 / JCM 1781 / NBRC 1676 / NRRL YB-4239) (Yeast).